Here is an 821-residue protein sequence, read N- to C-terminus: TORTIFOLIA1-like protein 1 (821 aa).

5 HEAT repeats span residues 69–110, 114–151, 163–201, 205–242, and 245–282; these read PDSP…SYTD, SQLA…QFLK, SSLV…SATE, AAFQ…VGAI, and QSLE…HSSS. A Phosphoserine modification is found at serine 406. 2 disordered regions span residues 416–437 and 553–610; these read PSRQ…NTSV and MSIQ…RAWD. Residues 501 to 554 adopt a coiled-coil conformation; the sequence is PPLQRQLLHLERQQTHIMNMLQDFMGGSHDGMISLENRVRGLERIVEEMSREMS. The segment covering 579–590 has biased composition (polar residues); sequence YGPSSRNTQTST.

In terms of tissue distribution, expressed at low levels in roots, hypocotyls, stems, flowers, siliques, cotyledons, and leaves. Particularly present in hydathodes of cotyledons and root hairs.

Its subcellular location is the cytoplasm. It is found in the cytoskeleton. In terms of biological role, plant-specific microtubule-associated protein (MAP) that regulates the orientation of cortical microtubules and the direction of organ growth. The protein is TORTIFOLIA1-like protein 1 of Arabidopsis thaliana (Mouse-ear cress).